A 131-amino-acid chain; its full sequence is Protein NrdI (131 aa).

Belongs to the NrdI family.

Probably involved in ribonucleotide reductase function. The sequence is that of Protein NrdI from Bacillus licheniformis (strain ATCC 14580 / DSM 13 / JCM 2505 / CCUG 7422 / NBRC 12200 / NCIMB 9375 / NCTC 10341 / NRRL NRS-1264 / Gibson 46).